Consider the following 422-residue polypeptide: Serine--tRNA ligase (422 aa).

229 to 231 (TAE) serves as a coordination point for L-serine. 260-262 (RAE) lines the ATP pocket. Residue Glu-283 coordinates L-serine. 347 to 350 (EISS) is a binding site for ATP. Residue Ser-383 coordinates L-serine.

Belongs to the class-II aminoacyl-tRNA synthetase family. Type-1 seryl-tRNA synthetase subfamily. As to quaternary structure, homodimer. The tRNA molecule binds across the dimer.

The protein localises to the cytoplasm. It carries out the reaction tRNA(Ser) + L-serine + ATP = L-seryl-tRNA(Ser) + AMP + diphosphate + H(+). It catalyses the reaction tRNA(Sec) + L-serine + ATP = L-seryl-tRNA(Sec) + AMP + diphosphate + H(+). It functions in the pathway aminoacyl-tRNA biosynthesis; selenocysteinyl-tRNA(Sec) biosynthesis; L-seryl-tRNA(Sec) from L-serine and tRNA(Sec): step 1/1. Functionally, catalyzes the attachment of serine to tRNA(Ser). Is also able to aminoacylate tRNA(Sec) with serine, to form the misacylated tRNA L-seryl-tRNA(Sec), which will be further converted into selenocysteinyl-tRNA(Sec). In Halothermothrix orenii (strain H 168 / OCM 544 / DSM 9562), this protein is Serine--tRNA ligase.